Reading from the N-terminus, the 232-residue chain is Noggin (232 aa).

An N-terminal signal peptide occupies residues 1–27; sequence MERCPSLGVTLYALVVVLGLRAAPAGG. The N-linked (GlcNAc...) asparagine glycan is linked to N62. The interval 77 to 99 is disordered; that stretch reads GFMATSPPEDRPGGGGGPAGGAE. 4 cysteine pairs are disulfide-bonded: C155–C192, C178–C228, C184–C230, and C207–C215.

This sequence belongs to the noggin family. Homodimer. Interacts with GDF5; inhibits chondrocyte differentiation. In terms of tissue distribution, expressed in condensing cartilage and immature chondrocytes.

The protein resides in the secreted. In terms of biological role, essential for cartilage morphogenesis and joint formation. Inhibitor of bone morphogenetic proteins (BMP) signaling which is required for growth and patterning of the neural tube and somite. Inhibits chondrocyte differentiation through its interaction with GDF5 and, probably, GDF6. In Mus musculus (Mouse), this protein is Noggin (Nog).